A 901-amino-acid chain; its full sequence is Aconitate hydratase A (901 aa).

[4Fe-4S] cluster-binding residues include Cys443, Cys509, and Cys512.

The protein belongs to the aconitase/IPM isomerase family. As to quaternary structure, monomer. It depends on [4Fe-4S] cluster as a cofactor.

It catalyses the reaction citrate = D-threo-isocitrate. The catalysed reaction is (2S,3R)-3-hydroxybutane-1,2,3-tricarboxylate = 2-methyl-cis-aconitate + H2O. It participates in carbohydrate metabolism; tricarboxylic acid cycle; isocitrate from oxaloacetate: step 2/2. Its pathway is organic acid metabolism; propanoate degradation. Involved in the catabolism of short chain fatty acids (SCFA) via the tricarboxylic acid (TCA)(acetyl degradation route) and probably the 2-methylcitrate cycle I (propionate degradation route). Catalyzes the reversible isomerization of citrate to isocitrate via cis-aconitate. Could catalyze the hydration of 2-methyl-cis-aconitate to yield (2R,3S)-2-methylisocitrate. The apo form of AcnA functions as a RNA-binding regulatory protein. In Staphylococcus epidermidis (strain ATCC 35984 / DSM 28319 / BCRC 17069 / CCUG 31568 / BM 3577 / RP62A), this protein is Aconitate hydratase A (acnA).